A 208-amino-acid chain; its full sequence is N-(5'-phosphoribosyl)anthranilate isomerase (208 aa).

The protein belongs to the TrpF family.

The enzyme catalyses N-(5-phospho-beta-D-ribosyl)anthranilate = 1-(2-carboxyphenylamino)-1-deoxy-D-ribulose 5-phosphate. It functions in the pathway amino-acid biosynthesis; L-tryptophan biosynthesis; L-tryptophan from chorismate: step 3/5. The chain is N-(5'-phosphoribosyl)anthranilate isomerase from Neisseria gonorrhoeae (strain ATCC 700825 / FA 1090).